Consider the following 61-residue polypeptide: Large ribosomal subunit protein bL32 (61 aa).

Belongs to the bacterial ribosomal protein bL32 family.

This chain is Large ribosomal subunit protein bL32, found in Acidithiobacillus ferrooxidans (strain ATCC 23270 / DSM 14882 / CIP 104768 / NCIMB 8455) (Ferrobacillus ferrooxidans (strain ATCC 23270)).